We begin with the raw amino-acid sequence, 253 residues long: Adapter protein MecA (253 aa).

The protein belongs to the MecA family. In terms of assembly, homodimer.

Its function is as follows. Enables the recognition and targeting of unfolded and aggregated proteins to the ClpC protease or to other proteins involved in proteolysis. The chain is Adapter protein MecA from Streptococcus pyogenes serotype M18 (strain MGAS8232).